A 233-amino-acid polypeptide reads, in one-letter code: 5'-methylthioadenosine/S-adenosylhomocysteine nucleosidase (233 aa).

The active-site Proton acceptor is the Glu12. Substrate is bound by residues Gly78, Ile152, and 173–174 (ME). Asp197 acts as the Proton donor in catalysis.

This sequence belongs to the PNP/UDP phosphorylase family. MtnN subfamily. As to quaternary structure, homodimer.

The catalysed reaction is S-adenosyl-L-homocysteine + H2O = S-(5-deoxy-D-ribos-5-yl)-L-homocysteine + adenine. It catalyses the reaction S-methyl-5'-thioadenosine + H2O = 5-(methylsulfanyl)-D-ribose + adenine. The enzyme catalyses 5'-deoxyadenosine + H2O = 5-deoxy-D-ribose + adenine. It functions in the pathway amino-acid biosynthesis; L-methionine biosynthesis via salvage pathway; S-methyl-5-thio-alpha-D-ribose 1-phosphate from S-methyl-5'-thioadenosine (hydrolase route): step 1/2. In terms of biological role, catalyzes the irreversible cleavage of the glycosidic bond in both 5'-methylthioadenosine (MTA) and S-adenosylhomocysteine (SAH/AdoHcy) to adenine and the corresponding thioribose, 5'-methylthioribose and S-ribosylhomocysteine, respectively. Also cleaves 5'-deoxyadenosine, a toxic by-product of radical S-adenosylmethionine (SAM) enzymes, into 5-deoxyribose and adenine. Thus, is required for in vivo function of the radical SAM enzymes biotin synthase and lipoic acid synthase, that are inhibited by 5'-deoxyadenosine accumulation. The polypeptide is 5'-methylthioadenosine/S-adenosylhomocysteine nucleosidase (Yersinia enterocolitica serotype O:8 / biotype 1B (strain NCTC 13174 / 8081)).